We begin with the raw amino-acid sequence, 462 residues long: tRNA pseudouridine(32) synthase, mitochondrial (462 aa).

A mitochondrion-targeting transit peptide spans 1–24 (MQRNNRLRNLFTVPVIMARQLKRN). The S4 RNA-binding domain occupies 127-188 (KLVDVFISEF…HEPPVTSRPI (62 aa)). Aspartate 238 is an active-site residue.

Belongs to the pseudouridine synthase RluA family.

Its subcellular location is the mitochondrion. The enzyme catalyses uridine(32) in tRNA = pseudouridine(32) in tRNA. Functionally, responsible for synthesis of pseudouridine from uracil-32 in mitochondrial transfer RNAs. This chain is tRNA pseudouridine(32) synthase, mitochondrial (PUS9), found in Saccharomyces cerevisiae (strain ATCC 204508 / S288c) (Baker's yeast).